A 142-amino-acid polypeptide reads, in one-letter code: Cystatin-8 (142 aa).

The N-terminal stretch at 1–21 (MPRCRWLSLILLTIPLALVAR) is a signal peptide. N-linked (GlcNAc...) asparagine glycans are attached at residues N27 and N39. The Secondary area of contact motif lies at 77–81 (QVTNL). Cystine bridges form between C95-C105 and C119-C139.

This sequence belongs to the cystatin family. Proximal caput region of the epididymis. Lower expression in the testis. Within the testis it is localized to the elongating spermatids, whereas within the epididymis it is exclusively synthesized by the proximal caput epithelium.

The protein resides in the secreted. Performs a specialized role during sperm development and maturation. This chain is Cystatin-8 (CST8), found in Homo sapiens (Human).